Reading from the N-terminus, the 221-residue chain is Pre-hexon-linking protein VIII (221 aa).

A Phosphothreonine; by host modification is found at Thr65. Residues 113-150 (AAPWSGVKTGSFCGRGLQLAEPPTTAIYPSGLFHLGRG) constitute a propeptide that is removed on maturation.

It belongs to the adenoviridae hexon-linking protein family. Interacts with the peripentonal hexons as well as the hexons in the facets. Part of a complex composed of the core-capsid bridging protein, the endosome lysis protein VI and the hexon-linking protein VIII; these interactions bridge the virus core to the capsid. Cleaved by the viral protease during virion maturation. May cause the middle segment to be shed from the capsid.

It is found in the virion. The protein localises to the host nucleus. Structural component of the virion that acts as a cement protein on the capsid interior and which glue the peripentonal hexons and group-of-nine hexons together. This is Pre-hexon-linking protein VIII from Sus scrofa (Pig).